Here is a 93-residue protein sequence, read N- to C-terminus: Large ribosomal subunit protein uL23cz/uL23cy (93 aa).

Belongs to the universal ribosomal protein uL23 family. In terms of assembly, part of the 50S ribosomal subunit.

The protein localises to the plastid. The protein resides in the chloroplast. Functionally, binds to 23S rRNA. The polypeptide is Large ribosomal subunit protein uL23cz/uL23cy (rpl23-A) (Drimys granadensis).